We begin with the raw amino-acid sequence, 250 residues long: 5-oxoprolinase subunit A (250 aa).

It belongs to the LamB/PxpA family. In terms of assembly, forms a complex composed of PxpA, PxpB and PxpC.

The enzyme catalyses 5-oxo-L-proline + ATP + 2 H2O = L-glutamate + ADP + phosphate + H(+). Catalyzes the cleavage of 5-oxoproline to form L-glutamate coupled to the hydrolysis of ATP to ADP and inorganic phosphate. The polypeptide is 5-oxoprolinase subunit A (Paraburkholderia xenovorans (strain LB400)).